Here is a 315-residue protein sequence, read N- to C-terminus: MKWSEVCVHTTQEAIEAVSNILHEAGASGVVIEDVEDFEMMSHREDNFGEIWDEKKRDEYPDSGVLVKAYLAESSDLTDTIKGIERDIQMLTKFGLTIGAGTVTLTQVDEEDWAHSWKQFYKPVKISRHLTVVPMWEEYTPQPDEKIIELDPGMAFGTGTHPTTVLCIQAIENYLQDNDRVVDVGTGSGVLAIAAAKLGAKDVFALDLDEVAVRSATDNVALNKVSQQVTVRQGDLMKELKEPVELIVANILAEVILLFVNDAYELTLPGGHFIASGIIGQKKEMVRDAMVAAGFTIVETTKLEDWVAIIAKREA.

S-adenosyl-L-methionine is bound by residues threonine 164, glycine 185, aspartate 207, and asparagine 250.

It belongs to the methyltransferase superfamily. PrmA family.

It localises to the cytoplasm. The catalysed reaction is L-lysyl-[protein] + 3 S-adenosyl-L-methionine = N(6),N(6),N(6)-trimethyl-L-lysyl-[protein] + 3 S-adenosyl-L-homocysteine + 3 H(+). Its function is as follows. Methylates ribosomal protein L11. The sequence is that of Ribosomal protein L11 methyltransferase from Exiguobacterium sibiricum (strain DSM 17290 / CCUG 55495 / CIP 109462 / JCM 13490 / 255-15).